Consider the following 69-residue polypeptide: Peptide Hact-1 (69 aa).

The first 21 residues, methionine 1–glycine 21, serve as a signal peptide directing secretion. Residues alanine 22–proline 57 constitute a propeptide that is removed on maturation. Cysteine 59 and cysteine 68 are disulfide-bonded.

In terms of tissue distribution, tentacle (ecto and/or endoderm tissue), and possibly also nematoblasts.

The protein localises to the secreted. Its subcellular location is the nematocyst. Its function is as follows. Peptide with unknown function. Has a limited effect on human peripheral blood mononuclear cells. Does not show activity against both Gram-positive and Gram-negative bacteria nor is it active on the 26 voltage-gated ion channels tested. This Heliofungia actiniformis (Mushroom coral) protein is Peptide Hact-1.